Reading from the N-terminus, the 390-residue chain is MNKTNPTIALVAGEVSGDILGAGLIRQLKAHYPNARFIGIAGPRMLAEGCETLVDMEELSVMGLAEILKHLPRLLKIRKNIIQTMLQEKPDVYIGIDAPDFNLDVELKLKANGIKTIHYVSPSVWAWRQNRIHKIAKATHQVLAFLPFEKAFYDKFNVPCRFIGHTMADAIPLKPNRAEACQTLQIDPAQRYLAILVGSRGSEVEFLAEPFLKTALLLKEQFPDLQFLVPLVNEKRRIQFEAIKAKITPNLDLHLIDGNARQAMIAADATLLASGTAALEAMLCKSPMVVGYRMKPLTYFLAKRLVKTDYISLPNLLANEMLVPEMIQEECTPELLAEKLSVYLSDDESAVKNRHVLIQHFTDLHQKIQCNADKQAAQAVIDLLEGTENV.

This sequence belongs to the LpxB family.

It carries out the reaction a lipid X + a UDP-2-N,3-O-bis[(3R)-3-hydroxyacyl]-alpha-D-glucosamine = a lipid A disaccharide + UDP + H(+). It functions in the pathway bacterial outer membrane biogenesis; LPS lipid A biosynthesis. Condensation of UDP-2,3-diacylglucosamine and 2,3-diacylglucosamine-1-phosphate to form lipid A disaccharide, a precursor of lipid A, a phosphorylated glycolipid that anchors the lipopolysaccharide to the outer membrane of the cell. In Haemophilus influenzae (strain PittEE), this protein is Lipid-A-disaccharide synthase.